Reading from the N-terminus, the 33-residue chain is Photosystem II reaction center protein Psb30 (33 aa).

Residues 5-25 traverse the membrane as a helical segment; it reads VILQLGSILLVVAAGPLVIVL.

It belongs to the Psb30/Ycf12 family. PSII is composed of 1 copy each of membrane proteins PsbA, PsbB, PsbC, PsbD, PsbE, PsbF, PsbH, PsbI, PsbJ, PsbK, PsbL, PsbM, PsbT, PsbX, PsbY, PsbZ, Psb30/Ycf12, peripheral proteins of the oxygen-evolving complex and a large number of cofactors. It forms dimeric complexes.

Its subcellular location is the plastid. It localises to the chloroplast thylakoid membrane. A core subunit of photosystem II (PSII), probably helps stabilize the reaction center. The polypeptide is Photosystem II reaction center protein Psb30 (Oltmannsiellopsis viridis (Marine flagellate)).